The following is a 330-amino-acid chain: Biotin synthase (330 aa).

The Radical SAM core domain occupies 43–272 (FMGDKFDTCS…RAFLRFSGGR (230 aa)). [4Fe-4S] cluster contacts are provided by Cys61, Cys65, and Cys68. 4 residues coordinate [2Fe-2S] cluster: Ser105, Cys137, Cys197, and Arg267.

This sequence belongs to the radical SAM superfamily. Biotin synthase family. Homodimer. The cofactor is [4Fe-4S] cluster. Requires [2Fe-2S] cluster as cofactor.

The enzyme catalyses (4R,5S)-dethiobiotin + (sulfur carrier)-SH + 2 reduced [2Fe-2S]-[ferredoxin] + 2 S-adenosyl-L-methionine = (sulfur carrier)-H + biotin + 2 5'-deoxyadenosine + 2 L-methionine + 2 oxidized [2Fe-2S]-[ferredoxin]. It participates in cofactor biosynthesis; biotin biosynthesis; biotin from 7,8-diaminononanoate: step 2/2. Functionally, catalyzes the conversion of dethiobiotin (DTB) to biotin by the insertion of a sulfur atom into dethiobiotin via a radical-based mechanism. This Porphyromonas gingivalis (strain ATCC 33277 / DSM 20709 / CIP 103683 / JCM 12257 / NCTC 11834 / 2561) protein is Biotin synthase.